We begin with the raw amino-acid sequence, 200 residues long: uncharacterized protein (200 aa).

Residues 1–19 form the signal peptide; it reads MNAMFHSLFALSFVSLVAS. The chain crosses the membrane as a helical span at residues 148–168; the sequence is FMVIVSLAAFCISVLAGLALQ.

It is found in the membrane. This is an uncharacterized protein from Caenorhabditis elegans.